The following is a 435-amino-acid chain: 5-hydroxybenzimidazole synthase (435 aa).

Substrate-binding positions include Met95, Tyr124, His163, 186-188 (SKG), 227-230 (NGLR), and Glu266. Position 270 (His270) interacts with Zn(2+). Tyr293 lines the substrate pocket. Residue His334 coordinates Zn(2+). Residues Cys410, Cys413, and Cys417 each coordinate [4Fe-4S] cluster.

The protein belongs to the ThiC family. 5-hydroxybenzimidazole synthase subfamily. Homodimer. [4Fe-4S] cluster serves as cofactor.

The catalysed reaction is 5-amino-1-(5-phospho-beta-D-ribosyl)imidazole + AH2 + S-adenosyl-L-methionine = 5-hydroxybenzimidazole + 5'-deoxyadenosine + formate + L-methionine + A + NH4(+) + phosphate + 2 H(+). It functions in the pathway cofactor biosynthesis; adenosylcobalamin biosynthesis. In terms of biological role, catalyzes the complex conversion of aminoimidazole ribotide (AIR) to 5-hydroxybenzimidazole (5-HBI) in a radical S-adenosyl-L-methionine (SAM)-dependent reaction. Is thus involved in the anaerobic biosynthesis of dimethylbenzimidazole (DMB), the lower axial ligand of vitamin B12 (cobalamin). The chain is 5-hydroxybenzimidazole synthase from Desulfuromonas acetoxidans (strain DSM 684 / 11070).